Reading from the N-terminus, the 305-residue chain is tRNA pseudouridine synthase B (305 aa).

D39 acts as the Nucleophile in catalysis.

The protein belongs to the pseudouridine synthase TruB family. Type 1 subfamily.

It catalyses the reaction uridine(55) in tRNA = pseudouridine(55) in tRNA. Responsible for synthesis of pseudouridine from uracil-55 in the psi GC loop of transfer RNAs. In Staphylococcus aureus (strain bovine RF122 / ET3-1), this protein is tRNA pseudouridine synthase B.